Reading from the N-terminus, the 117-residue chain is Large ribosomal subunit protein uL18 (117 aa).

The protein belongs to the universal ribosomal protein uL18 family. In terms of assembly, part of the 50S ribosomal subunit; part of the 5S rRNA/L5/L18/L25 subcomplex. Contacts the 5S and 23S rRNAs.

In terms of biological role, this is one of the proteins that bind and probably mediate the attachment of the 5S RNA into the large ribosomal subunit, where it forms part of the central protuberance. The polypeptide is Large ribosomal subunit protein uL18 (Francisella tularensis subsp. tularensis (strain FSC 198)).